The chain runs to 218 residues: Small ribosomal subunit protein uS3c (218 aa).

The region spanning 47–118 (VQKNMRTSSG…KLNIAVTRIA (72 aa)) is the KH type-2 domain.

The protein belongs to the universal ribosomal protein uS3 family. Part of the 30S ribosomal subunit.

It is found in the plastid. The protein localises to the chloroplast. The sequence is that of Small ribosomal subunit protein uS3c (rps3) from Solanum bulbocastanum (Wild potato).